Here is a 136-residue protein sequence, read N- to C-terminus: Histone H3.1/H3.2 (136 aa).

A disordered region spans residues 1–42 (MARTKQTARKSTGGKAPRKQLASKAARKAAPATGGVKKPHRY). The residue at position 5 (lysine 5) is an N6,N6,N6-trimethyllysine; alternate. Lysine 5 bears the N6,N6-dimethyllysine; alternate mark. Lysine 5 and lysine 10 each carry N6-methyllysine; alternate. Lysine 10 carries the N6-acetyllysine; alternate modification. Residue serine 11 is modified to Phosphoserine. N6,N6-dimethyllysine; alternate is present on lysine 15. N6-acetyllysine; alternate is present on residues lysine 15, lysine 19, lysine 24, lysine 28, and lysine 37. An N6-methyllysine; alternate mark is found at lysine 19, lysine 24, lysine 28, and lysine 37. The segment covering 19–32 (KQLASKAARKAAPA) has biased composition (low complexity). N6,N6,N6-trimethyllysine; alternate is present on residues lysine 28 and lysine 37. Lysine 28 and lysine 37 each carry N6,N6-dimethyllysine; alternate. An N6-acetyllysine mark is found at lysine 57 and lysine 65. Lysine 80 carries the post-translational modification N6,N6,N6-trimethyllysine; alternate. The residue at position 80 (lysine 80) is an N6,N6-dimethyllysine; alternate. Lysine 80 bears the N6-methyllysine; alternate mark.

Belongs to the histone H3 family. In terms of assembly, the nucleosome is a histone octamer containing two molecules each of H2A, H2B, H3 and H4 assembled in one H3-H4 heterotetramer and two H2A-H2B heterodimers. The octamer wraps approximately 147 bp of DNA. Post-translationally, phosphorylated by ark1 to form H3S10ph in a cell cycle-dependent manner during mitosis and meiosis. H3S10ph is also formed by ssp2, promotes subsequent H3K14ac formation by gcn5, and is required for transcriptional activation through TBP recruitment to the promoters. Dephosphorylation is performed by sds21. Mono-, di- and trimethylated by the COMPASS complex to form H3K4me1/2/3. H3K4me activates gene expression by regulating transcription elongation and plays a role in telomere length maintenance. H3K4me enrichment correlates with transcription levels, and occurs in a 5' to 3' gradient with H3K4me3 enrichment at the 5'-end of genes, shifting to H3K4me2 and then H3K4me1. Methylated by clr4 to form H3K9me1. H3K9me1 represents a specific tag for epigenetic transcriptional repression by recruiting swi6/HP1 to methylated histones. Targeting to histone probably involves clr3 and rik1. Essential for silencing of centromeres and directional switching of the mating type. Methylated by set2 to form H3K36me. H3K36me represses gene expression. Methylated by dot1 to form H3K79me. H3K79me is required for association of SIR proteins with telomeric regions and for telomeric silencing. The COMPASS-mediated formation of H3K4me2/3 and the dot1-mediated formation of H3K79me require H2BK123ub1. In terms of processing, acetylation of histone H3 leads to transcriptional activation. H3K14ac formation by gcn5 is promoted by H3S10ph. H3K14ac can also be formed by esa1. H3K56ac formation occurs predominantly in newly synthesized H3 molecules during G1, S and G2/M of the cell cycle and may be involved in DNA repair.

It is found in the nucleus. It localises to the chromosome. Functionally, core component of nucleosome. Nucleosomes wrap and compact DNA into chromatin, limiting DNA accessibility to the cellular machineries which require DNA as a template. Histones thereby play a central role in transcription regulation, DNA repair, DNA replication and chromosomal stability. DNA accessibility is regulated via a complex set of post-translational modifications of histones, also called histone code, and nucleosome remodeling. This is Histone H3.1/H3.2 (hht1) from Schizosaccharomyces pombe (strain 972 / ATCC 24843) (Fission yeast).